A 257-amino-acid chain; its full sequence is RNA polymerase sigma-G factor (257 aa).

Residues 66–79 carry the Polymerase core binding motif; sequence DLFQVGCIGLIKSI. Residues 228-247 constitute a DNA-binding region (H-T-H motif); it reads QMEVADEIGISQAQVSRLEK.

It belongs to the sigma-70 factor family.

Sigma factors are initiation factors that promote the attachment of RNA polymerase to specific initiation sites and are then released. This sigma factor is responsible for the expression of sporulation specific genes. The sequence is that of RNA polymerase sigma-G factor (sigG) from Clostridium acetobutylicum (strain ATCC 824 / DSM 792 / JCM 1419 / IAM 19013 / LMG 5710 / NBRC 13948 / NRRL B-527 / VKM B-1787 / 2291 / W).